The chain runs to 126 residues: Fluoride-specific ion channel FluC (126 aa).

3 consecutive transmembrane segments (helical) span residues 33–53 (LPLNVLIVNVIGAFILGVFIV), 64–84 (YSLFAAIGFCGSLTTMSSFAL), and 96–116 (GALAANIIVNVGLSIGALIGG). 2 residues coordinate Na(+): G74 and T77.

This sequence belongs to the fluoride channel Fluc/FEX (TC 1.A.43) family.

Its subcellular location is the cell membrane. It catalyses the reaction fluoride(in) = fluoride(out). With respect to regulation, na(+) is not transported, but it plays an essential structural role and its presence is essential for fluoride channel function. Fluoride-specific ion channel. Important for reducing fluoride concentration in the cell, thus reducing its toxicity. The sequence is that of Fluoride-specific ion channel FluC from Nitrosopumilus maritimus (strain SCM1).